The sequence spans 177 residues: Peptide methionine sulfoxide reductase MsrA (177 aa).

Cysteine 15 is a catalytic residue.

Belongs to the MsrA Met sulfoxide reductase family.

The enzyme catalyses L-methionyl-[protein] + [thioredoxin]-disulfide + H2O = L-methionyl-(S)-S-oxide-[protein] + [thioredoxin]-dithiol. It catalyses the reaction [thioredoxin]-disulfide + L-methionine + H2O = L-methionine (S)-S-oxide + [thioredoxin]-dithiol. Has an important function as a repair enzyme for proteins that have been inactivated by oxidation. Catalyzes the reversible oxidation-reduction of methionine sulfoxide in proteins to methionine. In Listeria innocua serovar 6a (strain ATCC BAA-680 / CLIP 11262), this protein is Peptide methionine sulfoxide reductase MsrA.